The sequence spans 323 residues: 1D-myo-inositol 2-acetamido-2-deoxy-alpha-D-glucopyranoside deacetylase (323 aa).

Residues His28, Asp31, and His163 each contribute to the Zn(2+) site.

It belongs to the MshB deacetylase family. It depends on Zn(2+) as a cofactor.

The enzyme catalyses 1D-myo-inositol 2-acetamido-2-deoxy-alpha-D-glucopyranoside + H2O = 1D-myo-inositol 2-amino-2-deoxy-alpha-D-glucopyranoside + acetate. Its function is as follows. Catalyzes the deacetylation of 1D-myo-inositol 2-acetamido-2-deoxy-alpha-D-glucopyranoside (GlcNAc-Ins) in the mycothiol biosynthesis pathway. The protein is 1D-myo-inositol 2-acetamido-2-deoxy-alpha-D-glucopyranoside deacetylase of Streptomyces scabiei (strain 87.22).